A 256-amino-acid chain; its full sequence is Hemolymph lipopolysaccharide-binding protein (256 aa).

A signal peptide spans 1–21 (MMNTRALLPLSVLLMATLCLC). Residues 22-33 (ELPIPILQRFVR) constitute a propeptide that is removed on maturation. N56 is a glycosylation site (N-linked (GlcNAc...) asparagine). Residues 146-256 (IICQQEGGHL…KLPFVCEVEL (111 aa)) form the C-type lectin domain. 2 disulfides stabilise this stretch: C148–C252 and C230–C244.

In terms of tissue distribution, hemolymph.

Its subcellular location is the secreted. Its function is as follows. Participates probably in the elimination of foreign substances invading the insect abdominal cavity, and in trapping intracellular symbionts, when they leak from the mycetomes into the hemolymph. The sequence is that of Hemolymph lipopolysaccharide-binding protein from Periplaneta americana (American cockroach).